The sequence spans 253 residues: Proteasome subunit alpha type-3 (253 aa).

A disordered region spans residues 230-253 (ELTEKARKAGDAANKDEDSDNETH). A compositionally biased stretch (basic and acidic residues) spans 231–253 (LTEKARKAGDAANKDEDSDNETH). The residue at position 248 (Ser-248) is a Phosphoserine.

This sequence belongs to the peptidase T1A family. As to quaternary structure, the 26S proteasome consists of a 20S proteasome core and two 19S regulatory subunits. The 20S proteasome core is composed of 28 subunits that are arranged in four stacked rings, resulting in a barrel-shaped structure. The two end rings are each formed by seven alpha subunits, and the two central rings are each formed by seven beta subunits. The catalytic chamber with the active sites is on the inside of the barrel. Interacts with ntc.

The protein localises to the cytoplasm. It is found in the nucleus. Functionally, the proteasome is a multicatalytic proteinase complex which is characterized by its ability to cleave peptides with Arg, Phe, Tyr, Leu, and Glu adjacent to the leaving group at neutral or slightly basic pH. The proteasome has an ATP-dependent proteolytic activity. The chain is Proteasome subunit alpha type-3 (Prosalpha7) from Drosophila melanogaster (Fruit fly).